Consider the following 188-residue polypeptide: Protein SYC1 (188 aa).

As to quaternary structure, component of the cleavage and polyadenylation factor (CPF) complex, which is composed of at least PTI1, SYC1, SSU72, GLC7, MPE1, REF2, PFS2, PTA1, YSH1/BRR5, SWD2, CFT2/YDH1, YTH1, CFT1/YHH1, FIP1 and PAP1. Component of the APT complex, which is a subcomplex of CPF, and is composed of PTI1, SYC1, SSU72, GLC7, REF2, PTA1 and SWD2.

The protein localises to the nucleus. In terms of biological role, component of the cleavage and polyadenylation factor (CPF) complex, which plays a key role in polyadenylation-dependent pre-mRNA 3'-end formation and cooperates with cleavage factors including the CFIA complex and NAB4/CFIB. Component of the APT complex, which may be involved in polyadenylation-independent transcript 3'-end formation, including snoRNAs and snRNAs. This chain is Protein SYC1 (SYC1), found in Saccharomyces cerevisiae (strain ATCC 204508 / S288c) (Baker's yeast).